The sequence spans 878 residues: NUT family member 2E (878 aa).

Disordered regions lie at residues 273–324, 417–511, 527–560, 622–757, and 775–878; these read WSQG…DDSC, QKSQ…VPEE, LLGP…PPDP, RLPP…EEEE, and WLPQ…HCSQ. 2 stretches are compositionally biased toward pro residues: residues 278–288 and 427–444; these read PLPPPPPPAAQ and CLPP…PPAP. Basic and acidic residues-rich tracts occupy residues 537 to 551 and 622 to 631; these read EPEK…KQPQ and RLPPLKEKQH.

It belongs to the NUT family.

This Homo sapiens (Human) protein is NUT family member 2E (NUTM2E).